A 348-amino-acid polypeptide reads, in one-letter code: GMP reductase 2 (348 aa).

Residues 26–27 (SR), K78, 129–131 (DVA), and 180–181 (IG) contribute to the NADP(+) site. K(+) is bound by residues G181, G183, and C186. C186 (thioimidate intermediate) is an active-site residue. The active-site Proton donor/acceptor is T188. R189 contacts K(+). GMP is bound by residues 219-221 (DGG), 242-243 (GG), 268-270 (GMS), and 286-290 (RASEG). NADP(+) is bound by residues M269 and 285–286 (YR). Residue K291 is modified to N6-acetyllysine. 314–317 (STCT) provides a ligand contact to NADP(+).

The protein belongs to the IMPDH/GMPR family. GuaC type 1 subfamily. As to quaternary structure, homotetramer.

It carries out the reaction IMP + NH4(+) + NADP(+) = GMP + NADPH + 2 H(+). Its function is as follows. Catalyzes the irreversible NADPH-dependent deamination of GMP to IMP. It functions in the conversion of nucleobase, nucleoside and nucleotide derivatives of G to A nucleotides, and in maintaining the intracellular balance of A and G nucleotides. Plays a role in modulating cellular differentiation. The sequence is that of GMP reductase 2 from Mus musculus (Mouse).